A 120-amino-acid chain; its full sequence is UPF0102 protein PTH_1707 (120 aa).

This sequence belongs to the UPF0102 family.

The chain is UPF0102 protein PTH_1707 from Pelotomaculum thermopropionicum (strain DSM 13744 / JCM 10971 / SI).